The primary structure comprises 247 residues: UPF0273 protein PF1931 (247 aa).

The region spanning 3–247 (RRVKTGIPGM…VLKRGRIYEL (245 aa)) is the KaiC domain. 30 to 37 (GGPGTGKS) provides a ligand contact to ATP.

This sequence belongs to the UPF0273 family.

This Pyrococcus furiosus (strain ATCC 43587 / DSM 3638 / JCM 8422 / Vc1) protein is UPF0273 protein PF1931.